The primary structure comprises 497 residues: NADH-quinone oxidoreductase subunit N (497 aa).

A run of 13 helical transmembrane segments spans residues 12–32 (MAPE…DLAL), 40–60 (PLAW…AAMI), 80–100 (AFKF…AEWA), 116–136 (LFAL…TLFV), 166–186 (VING…VFGL), 208–228 (LALA…TVPF), 240–260 (PVPA…ALLL), 284–304 (MQPI…VVAL), 316–336 (SGIA…WAMI), 341–361 (MYLL…AHIV), 383–403 (AAAL…AGFI), 430–450 (TVIS…RPTF), and 457–477 (LPAG…AIGW).

Belongs to the complex I subunit 2 family. NDH-1 is composed of 14 different subunits. Subunits NuoA, H, J, K, L, M, N constitute the membrane sector of the complex.

Its subcellular location is the cell membrane. It carries out the reaction a quinone + NADH + 5 H(+)(in) = a quinol + NAD(+) + 4 H(+)(out). NDH-1 shuttles electrons from NADH, via FMN and iron-sulfur (Fe-S) centers, to quinones in the respiratory chain. The immediate electron acceptor for the enzyme in this species is believed to be a menaquinone. Couples the redox reaction to proton translocation (for every two electrons transferred, four hydrogen ions are translocated across the cytoplasmic membrane), and thus conserves the redox energy in a proton gradient. The chain is NADH-quinone oxidoreductase subunit N from Geobacillus kaustophilus (strain HTA426).